Here is a 292-residue protein sequence, read N- to C-terminus: ATP synthase gamma chain (292 aa).

This sequence belongs to the ATPase gamma chain family. As to quaternary structure, F-type ATPases have 2 components, CF(1) - the catalytic core - and CF(0) - the membrane proton channel. CF(1) has five subunits: alpha(3), beta(3), gamma(1), delta(1), epsilon(1). CF(0) has three main subunits: a, b and c.

It localises to the cell inner membrane. In terms of biological role, produces ATP from ADP in the presence of a proton gradient across the membrane. The gamma chain is believed to be important in regulating ATPase activity and the flow of protons through the CF(0) complex. The protein is ATP synthase gamma chain of Bradyrhizobium sp. (strain ORS 278).